Here is a 649-residue protein sequence, read N- to C-terminus: Archaeal Lon protease (649 aa).

Topologically, residues 1 to 114 are cytoplasmic; sequence MFSIKFKTTE…KLDFKAPSST (114 aa). Position 47–54 (47–54) interacts with ATP; the sequence is GDPGVGKS. The chain crosses the membrane as a helical span at residues 115 to 135; it reads TLLLIMIGAILLSEYLLKYLP. Topologically, residues 136–138 are extracellular; that stretch reads QNY. A helical transmembrane segment spans residues 139–159; it reads LLAAVTITALIVLIFGFVIIL. Topologically, residues 160 to 649 are cytoplasmic; the sequence is TSIMGASRAS…DNRGGAERFN (490 aa). The Lon proteolytic domain maps to 456–639; sequence EPKVGVIYGL…DEIVPLVFDL (184 aa). Residues serine 550 and lysine 593 contribute to the active site.

Belongs to the peptidase S16 family. Archaeal LonB subfamily. Homohexamer. Organized in a ring with a central cavity.

Its subcellular location is the cell membrane. In terms of biological role, ATP-dependent serine protease that mediates the selective degradation of mutant and abnormal proteins as well as certain short-lived regulatory proteins. Degrades polypeptides processively. This Methanocaldococcus jannaschii (strain ATCC 43067 / DSM 2661 / JAL-1 / JCM 10045 / NBRC 100440) (Methanococcus jannaschii) protein is Archaeal Lon protease.